Reading from the N-terminus, the 32-residue chain is C-reactive protein (32 aa).

A Pentraxin (PTX) domain is found at 2–32 (VIKTLVFQSESNNSFVELIPMKPLNLRAFXL).

It belongs to the pentraxin family. As to quaternary structure, homopentamer. Pentraxin (or pentaxin) have a discoid arrangement of 5 non-covalently bound subunits. Post-translationally, glycosylated.

The protein localises to the secreted. Its function is as follows. Displays several functions associated with host defense: it promotes agglutination, bacterial capsular swelling, phagocytosis, and complement fixation through its calcium-dependent binding to phosphorylcholine. The polypeptide is C-reactive protein (Pleuronectes platessa (European plaice)).